We begin with the raw amino-acid sequence, 704 residues long: DNA ligase (704 aa).

NAD(+) contacts are provided by residues 43–47, 92–93, and Glu-124; these read DADYD and SL. Lys-126 serves as the catalytic N6-AMP-lysine intermediate. NAD(+) is bound by residues Arg-147, Glu-182, Lys-298, and Lys-322. Residues Cys-427, Cys-430, Cys-445, and Cys-451 each contribute to the Zn(2+) site. One can recognise a BRCT domain in the interval 625 to 704; sequence PVESPIAGKI…DAWLRLIGDA (80 aa).

It belongs to the NAD-dependent DNA ligase family. LigA subfamily. Mg(2+) serves as cofactor. Requires Mn(2+) as cofactor.

It catalyses the reaction NAD(+) + (deoxyribonucleotide)n-3'-hydroxyl + 5'-phospho-(deoxyribonucleotide)m = (deoxyribonucleotide)n+m + AMP + beta-nicotinamide D-nucleotide.. DNA ligase that catalyzes the formation of phosphodiester linkages between 5'-phosphoryl and 3'-hydroxyl groups in double-stranded DNA using NAD as a coenzyme and as the energy source for the reaction. It is essential for DNA replication and repair of damaged DNA. This Cereibacter sphaeroides (strain ATCC 17025 / ATH 2.4.3) (Rhodobacter sphaeroides) protein is DNA ligase.